The primary structure comprises 452 residues: Probable ECA polymerase (452 aa).

Helical transmembrane passes span 6 to 26, 37 to 57, 63 to 83, 118 to 138, 155 to 175, 181 to 201, 207 to 227, 228 to 248, 341 to 361, 378 to 398, and 410 to 430; these read FSGLLVVWLLSTLFIATLTWF, VFFSLLFLLTFFFGFPLTSVL, VGVAPPEILLQALLSAACFYG, VILMGIALVSVAIFFMHNGFL, GVALKRFFYFFIPAMLVVYFL, AWLFFLVSTVAFGLLTYMIVG, IIIAFAIFLFIGIIRGWISLW, MLAAAGVLGIVGMFWLALKRY, LVVMGGALFIPLGAIVVGLII, YKAAILHSFCFGAIFNMIVLA, and VFFLVVFGASLLVAKLLFWLF.

It belongs to the WzyE family. Probably part of a complex composed of WzxE, WzyE and WzzE.

It is found in the cell inner membrane. It functions in the pathway bacterial outer membrane biogenesis; enterobacterial common antigen biosynthesis. In terms of biological role, probably involved in the polymerization of enterobacterial common antigen (ECA) trisaccharide repeat units. The protein is Probable ECA polymerase of Salmonella choleraesuis (strain SC-B67).